The chain runs to 193 residues: Large ribosomal subunit protein uL5 (193 aa).

This sequence belongs to the universal ribosomal protein uL5 family. As to quaternary structure, part of the 50S ribosomal subunit; part of the 5S rRNA/L5/L18/L25 subcomplex. Contacts the 5S rRNA and the P site tRNA. Forms a bridge to the 30S subunit in the 70S ribosome.

In terms of biological role, this is one of the proteins that bind and probably mediate the attachment of the 5S RNA into the large ribosomal subunit, where it forms part of the central protuberance. In the 70S ribosome it contacts protein S13 of the 30S subunit (bridge B1b), connecting the 2 subunits; this bridge is implicated in subunit movement. Contacts the P site tRNA; the 5S rRNA and some of its associated proteins might help stabilize positioning of ribosome-bound tRNAs. This is Large ribosomal subunit protein uL5 from Rhizorhabdus wittichii (strain DSM 6014 / CCUG 31198 / JCM 15750 / NBRC 105917 / EY 4224 / RW1) (Sphingomonas wittichii).